A 290-amino-acid chain; its full sequence is Elongation factor Ts (290 aa).

Positions 87–90 (TDFV) are involved in Mg(2+) ion dislocation from EF-Tu.

The protein belongs to the EF-Ts family.

It is found in the cytoplasm. Associates with the EF-Tu.GDP complex and induces the exchange of GDP to GTP. It remains bound to the aminoacyl-tRNA.EF-Tu.GTP complex up to the GTP hydrolysis stage on the ribosome. The polypeptide is Elongation factor Ts (tsf) (Treponema pallidum (strain Nichols)).